The sequence spans 313 residues: Small ribosomal subunit protein uS2 (313 aa).

Positions 234 to 243 (DEEAKEEKTK) are enriched in basic and acidic residues. Residues 234-313 (DEEAKEEKTK…ASKAEAEEGK (80 aa)) are disordered. Residues 244–256 (AKTTAKKVVTKKA) show a composition bias toward basic residues. A compositionally biased stretch (basic and acidic residues) spans 266-297 (AEKKSEKPTTEKRPTKEAAETKETSEEPKTKE).

It belongs to the universal ribosomal protein uS2 family.

This chain is Small ribosomal subunit protein uS2, found in Coxiella burnetii (strain Dugway 5J108-111).